A 465-amino-acid polypeptide reads, in one-letter code: Lysosomal dipeptide transporter MFSD1 (465 aa).

The tract at residues 1-23 (MEEEDEEARALLAGGPDEADRGA) is disordered. The Dileucine internalization motif motif lies at 11 to 12 (LL). 12 helical membrane passes run 39-59 (LAHRLLVLLLMCFLGFGSYFC), 83-103 (LLYAWYSWPNVVLCFFGGFLI), 113-133 (TIIFSCFVCIGQVVFALGGIF), 135-155 (AFWLMEFGRFVFGIGGESLAV), 170-191 (LNLVFGLQLSMARIGSTVNMNL), 213-233 (ITLMIGGITCILSLICALALA), 266-286 (LWLIFIICVCYYVAVFPFIGL), 303-323 (SAINSVVYVISAPMSPVFGLL), 331-351 (IIWVLCAVAATLVSHMMLAFT), 361-381 (LLGLSYSLLACALWPMVAFVV), 392-412 (FMQSIQNLGLAIISIIAGMIL), and 418-438 (LFLEVFFIACVSLSLLSVVLL).

Belongs to the major facilitator superfamily. Homodimer. Interacts with lysosomal protein GLMP (via lumenal domain); the interaction starts while both proteins are still in the endoplasmic reticulum and is required for stabilization of MFSD1 in lysosomes but has no direct effect on its targeting to lysosomes or transporter activity.

The protein resides in the lysosome membrane. It catalyses the reaction L-alpha-aminoacyl-L-arginine(out) = L-alpha-aminoacyl-L-arginine(in). It carries out the reaction L-arginyl-L-alpha-amino acid(out) = L-arginyl-L-alpha-amino acid(in). The catalysed reaction is L-arginyl-glycine(out) = L-arginyl-glycine(in). The enzyme catalyses L-alpha-aminoacyl-L-lysine(out) = L-alpha-aminoacyl-L-lysine(in). It catalyses the reaction L-aspartyl-L-lysine(out) = L-aspartyl-L-lysine(in). It carries out the reaction L-alanyl-L-lysine(out) = L-alanyl-L-lysine(in). The catalysed reaction is L-lysyl-L-alpha-amino acid(out) = L-lysyl-L-alpha-amino acid(in). The enzyme catalyses L-lysyl-L-alanine(out) = L-lysyl-L-alanine(in). It catalyses the reaction L-lysyl-L-lysine(out) = L-lysyl-L-lysine(in). It carries out the reaction L-lysyl-glycine(out) = L-lysyl-glycine(in). The catalysed reaction is L-alpha-aminoacyl-L-histidine(out) = L-alpha-aminoacyl-L-histidine(in). The enzyme catalyses L-histidyl-L-alpha-amino acid(out) = L-histidyl-L-alpha-amino acid(in). It catalyses the reaction L-histidyl-glycine(out) = L-histidyl-glycine(in). Its function is as follows. Lysosomal dipeptide uniporter that selectively exports lysine, arginine or histidine-containing dipeptides with a net positive charge from the lysosome lumen into the cytosol. Could play a role in a specific type of protein O-glycosylation indirectly regulating macrophages migration and tissue invasion. Also essential for liver homeostasis. This Homo sapiens (Human) protein is Lysosomal dipeptide transporter MFSD1.